Consider the following 516-residue polypeptide: Histidine ammonia-lyase 1 (516 aa).

Residues 147–149 constitute a cross-link (5-imidazolinone (Ser-Gly)); the sequence is SSG. Ser-148 carries the 2,3-didehydroalanine (Ser) modification.

This sequence belongs to the PAL/histidase family. Contains an active site 4-methylidene-imidazol-5-one (MIO), which is formed autocatalytically by cyclization and dehydration of residues Ser-Ser-Gly.

It localises to the cytoplasm. It carries out the reaction L-histidine = trans-urocanate + NH4(+). Its pathway is amino-acid degradation; L-histidine degradation into L-glutamate; N-formimidoyl-L-glutamate from L-histidine: step 1/3. In Fusobacterium nucleatum subsp. nucleatum (strain ATCC 25586 / DSM 15643 / BCRC 10681 / CIP 101130 / JCM 8532 / KCTC 2640 / LMG 13131 / VPI 4355), this protein is Histidine ammonia-lyase 1 (hutH1).